We begin with the raw amino-acid sequence, 347 residues long: GMP reductase (347 aa).

Residue 108–131 (ADFEKTKQILDLNPALNFVCIDVA) participates in NADP(+) binding. Positions 181 and 183 each coordinate K(+). Residue Cys186 is the Thioimidate intermediate of the active site. 216-239 (IVSDGGCTTPGDVAKAFGGGADFV) is an NADP(+) binding site.

It belongs to the IMPDH/GMPR family. GuaC type 1 subfamily. Homotetramer.

It carries out the reaction IMP + NH4(+) + NADP(+) = GMP + NADPH + 2 H(+). Catalyzes the irreversible NADPH-dependent deamination of GMP to IMP. It functions in the conversion of nucleobase, nucleoside and nucleotide derivatives of G to A nucleotides, and in maintaining the intracellular balance of A and G nucleotides. The sequence is that of GMP reductase from Escherichia coli O127:H6 (strain E2348/69 / EPEC).